The primary structure comprises 48 residues: Large ribosomal subunit protein bL33A (48 aa).

Belongs to the bacterial ribosomal protein bL33 family.

This is Large ribosomal subunit protein bL33A from Streptococcus pyogenes serotype M28 (strain MGAS6180).